The sequence spans 531 residues: Tryptophan biosynthesis protein TRP1 (531 aa).

The interval 1–254 is indole-3-glycerol phosphate synthase; the sequence is MGNILEEIAA…TVKDLLQNVT (254 aa). Positions 255–531 are N-(5'-phosphoribosyl)anthranilate isomerase; sequence RHSESGEFAL…TLKIDEETEN (277 aa).

The protein in the N-terminal section; belongs to the TrpC family. In the C-terminal section; belongs to the TrpF family.

The catalysed reaction is N-(5-phospho-beta-D-ribosyl)anthranilate = 1-(2-carboxyphenylamino)-1-deoxy-D-ribulose 5-phosphate. It catalyses the reaction 1-(2-carboxyphenylamino)-1-deoxy-D-ribulose 5-phosphate + H(+) = (1S,2R)-1-C-(indol-3-yl)glycerol 3-phosphate + CO2 + H2O. It functions in the pathway amino-acid biosynthesis; L-tryptophan biosynthesis; L-tryptophan from chorismate: step 3/5. Its pathway is amino-acid biosynthesis; L-tryptophan biosynthesis; L-tryptophan from chorismate: step 4/5. Functionally, bifunctional enzyme that catalyzes two sequential steps of tryptophan biosynthetic pathway. This Phytophthora nicotianae (Potato buckeye rot agent) protein is Tryptophan biosynthesis protein TRP1 (TRP1).